The sequence spans 658 residues: Endoplasmic reticulum chaperone BiP (658 aa).

A signal peptide spans 1-19 (MVTMKLFALVLLVSASVFA). ATP contacts are provided by residues 38 to 41 (GTTY), K98, 228 to 230 (GGT), 294 to 301 (EKAKRALS), and 365 to 368 (GSTR). Residues 127-281 (KPYIEVDIGD…KKKTGKDVRA (155 aa)) are nucleotide-binding (NBD). The interval 410 to 420 (QDTGDLVLLDV) is interdomain linker. The segment at 421-501 (CPLTLGIETV…PRGVPQIEVT (81 aa)) is substrate-binding (SBD). The segment at 634–658 (KLYGGAGAPPPEGAEGAEETEKDEL) is disordered. The span at 648–658 (EGAEETEKDEL) shows a compositional bias: acidic residues. Residues 655-658 (KDEL) carry the Prevents secretion from ER motif.

The protein belongs to the heat shock protein 70 family. As to quaternary structure, monomer and homooligomer; homooligomerization via the interdomain linker inactivates the chaperone activity and acts as a storage of hspa5/BiP molecules. Interacts with DNAJC10. Interacts with dnajb9/ERdj4; leading to recruit hspa5/BiP to ern1/ire1. Interacts with ern1/ire1; interaction takes place following interaction with dnajb9/ERdj4 and leads to inactivate ern1/IRE1.

It localises to the endoplasmic reticulum lumen. It carries out the reaction ATP + H2O = ADP + phosphate + H(+). Its activity is regulated as follows. The chaperone activity is regulated by ATP-induced allosteric coupling of the nucleotide-binding (NBD) and substrate-binding (SBD) domains. In the ADP-bound and nucleotide-free (apo) states, the two domains have little interaction. In contrast, in the ATP-bound state the two domains are tightly coupled, which results in drastically accelerated kinetics in both binding and release of polypeptide substrates. J domain-containing co-chaperones (dnajb9/ERdj4 or dnajc10/ERdj5) stimulate the ATPase activity and are required for efficient substrate recognition by hspa5/BiP. Homooligomerization inactivates participating hspa5/BiP protomers and probably act as reservoirs to store hspa5/BiP molecules when they are not needed by the cell. Its function is as follows. Endoplasmic reticulum chaperone that plays a key role in protein folding and quality control in the endoplasmic reticulum lumen. Involved in the correct folding of proteins and degradation of misfolded proteins via its interaction with dnajc10/ERdj5, probably to facilitate the release of dnajc10/ERdj5 from its substrate. Acts as a key repressor of the EIF2AK3/PERK and ERN1/IRE1-mediated unfolded protein response (UPR). In the unstressed endoplasmic reticulum, recruited by DNAJB9/ERdj4 to the luminal region of ERN1/IRE1, leading to disrupt the dimerization of ERN1/IRE1, thereby inactivating ERN1/IRE1. Also binds and inactivates EIF2AK3/PERK in unstressed cells. Accumulation of misfolded protein in the endoplasmic reticulum causes release of HSPA5/BiP from ERN1/IRE1 and EIF2AK3/PERK, allowing their homodimerization and subsequent activation. This is Endoplasmic reticulum chaperone BiP from Xenopus laevis (African clawed frog).